We begin with the raw amino-acid sequence, 251 residues long: Hydroxyacylglutathione hydrolase (251 aa).

Residues H53, H55, D57, H58, H110, D127, and H165 each contribute to the Zn(2+) site.

It belongs to the metallo-beta-lactamase superfamily. Glyoxalase II family. In terms of assembly, monomer. Zn(2+) serves as cofactor.

The catalysed reaction is an S-(2-hydroxyacyl)glutathione + H2O = a 2-hydroxy carboxylate + glutathione + H(+). The protein operates within secondary metabolite metabolism; methylglyoxal degradation; (R)-lactate from methylglyoxal: step 2/2. In terms of biological role, thiolesterase that catalyzes the hydrolysis of S-D-lactoyl-glutathione to form glutathione and D-lactic acid. This chain is Hydroxyacylglutathione hydrolase, found in Yersinia pestis.